The following is a 309-amino-acid chain: Pyrroline-5-carboxylate reductase 1, mitochondrial (309 aa).

An N-acetylserine modification is found at Ser2. NADP(+) is bound by residues 6–11 and Ser34; that span reads IGAGQL. Ala8, Gln10, Leu11, Ser34, Asp36, Asn56, Val70, Lys71, and Ala97 together coordinate NADPH. NADP(+)-binding positions include Asn56, 69 to 72, and 95 to 97; these read AVKP and CAA. Position 164 (Glu164) interacts with L-proline. Asn230 is an NADPH binding site. L-proline-binding residues include Ala237 and Thr238. Ser278 and Ser301 each carry phosphoserine.

The protein belongs to the pyrroline-5-carboxylate reductase family. As to quaternary structure, homodecamer; composed of 5 homodimers. Interacts with LTO1. In terms of tissue distribution, highly expressed in osteoblasts and skin.

The protein resides in the mitochondrion. The catalysed reaction is L-proline + NADP(+) = (S)-1-pyrroline-5-carboxylate + NADPH + 2 H(+). The enzyme catalyses L-proline + NAD(+) = (S)-1-pyrroline-5-carboxylate + NADH + 2 H(+). The protein operates within amino-acid biosynthesis; L-proline biosynthesis; L-proline from L-glutamate 5-semialdehyde: step 1/1. In terms of biological role, oxidoreductase that catalyzes the last step in proline biosynthesis, which corresponds to the reduction of pyrroline-5-carboxylate to L-proline using NAD(P)H. At physiologic concentrations, has higher specific activity in the presence of NADH. Involved in the cellular response to oxidative stress. In Mus musculus (Mouse), this protein is Pyrroline-5-carboxylate reductase 1, mitochondrial.